Reading from the N-terminus, the 230-residue chain is uncharacterized protein (230 aa).

Positions 1 to 16 are cleaved as a signal peptide; it reads MTCVNVCFFLFPPCHR. The next 4 helical transmembrane spans lie at 27 to 47, 118 to 138, 150 to 170, and 172 to 191; these read VDLL…IPLI, LFFF…FLFF, FPIL…LSFL, and SLSH…LRVF.

It localises to the cytoplasm. Its subcellular location is the nucleus membrane. This is an uncharacterized protein from Schizosaccharomyces pombe (strain 972 / ATCC 24843) (Fission yeast).